The primary structure comprises 539 residues: Chaperonin GroEL 2 (539 aa).

ATP contacts are provided by residues 29-32 (TLGP), 86-90 (DGTTT), glycine 413, 477-479 (NAA), and aspartate 493. The tract at residues 519-539 (VVDKPEEEDSAAAGHGHGHSH) is disordered.

Belongs to the chaperonin (HSP60) family. Forms a cylinder of 14 subunits composed of two heptameric rings stacked back-to-back. Interacts with the co-chaperonin GroES.

The protein localises to the cytoplasm. It catalyses the reaction ATP + H2O + a folded polypeptide = ADP + phosphate + an unfolded polypeptide.. Functionally, together with its co-chaperonin GroES, plays an essential role in assisting protein folding. The GroEL-GroES system forms a nano-cage that allows encapsulation of the non-native substrate proteins and provides a physical environment optimized to promote and accelerate protein folding. This is Chaperonin GroEL 2 from Saccharopolyspora erythraea (strain ATCC 11635 / DSM 40517 / JCM 4748 / NBRC 13426 / NCIMB 8594 / NRRL 2338).